The sequence spans 354 residues: Thymidylate synthase (354 aa).

A disordered region spans residues 1-32 (MPAAGSEPSRPPSPPGVQEQSAEPRPPPPPHG). DUMP is bound at residue Arg-53. At Ser-117 the chain carries Phosphoserine. 178–179 (RR) contributes to the dUMP binding site. Residue Cys-198 is the Nucleophile of the active site. Residues 218 to 221 (RSGD), Asn-229, and 259 to 261 (HIY) each bind dUMP. Residue Asp-221 coordinates (6R)-5,10-methylene-5,6,7,8-tetrahydrofolate. Residue Lys-349 forms a Glycyl lysine isopeptide (Lys-Gly) (interchain with G-Cter in SUMO2) linkage. Ala-353 is a binding site for (6R)-5,10-methylene-5,6,7,8-tetrahydrofolate.

The protein belongs to the thymidylate synthase family. As to quaternary structure, homodimer.

It is found in the nucleus. It localises to the cytoplasm. The protein resides in the mitochondrion. Its subcellular location is the mitochondrion matrix. The protein localises to the mitochondrion inner membrane. The catalysed reaction is dUMP + (6R)-5,10-methylene-5,6,7,8-tetrahydrofolate = 7,8-dihydrofolate + dTMP. Its pathway is pyrimidine metabolism; dTTP biosynthesis. Its function is as follows. Catalyzes the reductive methylation of 2'-deoxyuridine 5'-monophosphate (dUMP) to thymidine 5'-monophosphate (dTMP), using the cosubstrate, 5,10- methylenetetrahydrofolate (CH2H4folate) as a 1-carbon donor and reductant and contributes to the de novo mitochondrial thymidylate biosynthesis pathway. This chain is Thymidylate synthase (TYMS), found in Bos taurus (Bovine).